A 718-amino-acid chain; its full sequence is Peroxisomal bifunctional enzyme (718 aa).

Residues 2-280 (ARYELVKRSV…FAQRTAEKWT (279 aa)) are enoyl-CoA hydratase / isomerase. Substrate is bound at residue Gly-100. The segment at 281-567 (LPSGAQWNNS…DMVCQQGRFG (287 aa)) is 3-hydroxyacyl-CoA dehydrogenase. Positions 716–718 (SHL) match the Microbody targeting signal motif.

It in the N-terminal section; belongs to the enoyl-CoA hydratase/isomerase family. In the C-terminal section; belongs to the 3-hydroxyacyl-CoA dehydrogenase family. In terms of assembly, monomer.

It localises to the peroxisome. The catalysed reaction is a (3S)-3-hydroxyacyl-CoA = a (2E)-enoyl-CoA + H2O. It catalyses the reaction a 4-saturated-(3S)-3-hydroxyacyl-CoA = a (3E)-enoyl-CoA + H2O. The enzyme catalyses a (3Z)-enoyl-CoA = a 4-saturated (2E)-enoyl-CoA. It carries out the reaction a (3E)-enoyl-CoA = a 4-saturated (2E)-enoyl-CoA. The catalysed reaction is a (3S)-3-hydroxyacyl-CoA + NAD(+) = a 3-oxoacyl-CoA + NADH + H(+). It catalyses the reaction (2S,3S)-3-hydroxy-2-methylbutanoyl-CoA = (2E)-2-methylbut-2-enoyl-CoA + H2O. The enzyme catalyses (3S)-hydroxyhexadecanoyl-CoA + NAD(+) = 3-oxohexadecanoyl-CoA + NADH + H(+). It carries out the reaction (3S)-hydroxyhexadecanoyl-CoA = (2E)-hexadecenoyl-CoA + H2O. The catalysed reaction is (2E)-hexadecenedioyl-CoA + H2O = (3S)-hydroxyhexadecanedioyl-CoA. It catalyses the reaction (3S)-hydroxyhexadecanedioyl-CoA + NAD(+) = 3-oxohexadecanedioyl-CoA + NADH + H(+). The enzyme catalyses (3E,5Z)-tetradecadienoyl-CoA = (2E,5Z)-tetradecadienoyl-CoA. It carries out the reaction (3E,5Z)-octadienoyl-CoA = (2E,5Z)-octadienoyl-CoA. The catalysed reaction is (3S)-hydroxydecanoyl-CoA + NAD(+) = 3-oxodecanoyl-CoA + NADH + H(+). It catalyses the reaction (3E)-decenoyl-CoA = (2E)-decenoyl-CoA. The enzyme catalyses (3Z)-hexenoyl-CoA = (2E)-hexenoyl-CoA. It carries out the reaction (3E)-hexenoyl-CoA = (2E)-hexenoyl-CoA. The catalysed reaction is (3S)-hydroxydecanoyl-CoA = (2E)-decenoyl-CoA + H2O. It catalyses the reaction (3S)-hydroxyhexanoyl-CoA = (2E)-hexenoyl-CoA + H2O. It participates in lipid metabolism; fatty acid beta-oxidation. Functionally, peroxisomal trifunctional enzyme possessing 2-enoyl-CoA hydratase, 3-hydroxyacyl-CoA dehydrogenase, and delta 3, delta 2-enoyl-CoA isomerase activities. Catalyzes two of the four reactions of the long straight chain fatty acids peroxisomal beta-oxidation pathway. Can also use branched-chain fatty acids such as 2-methyl-2E-butenoyl-CoA as a substrate, which is hydrated into (2S,3S)-3-hydroxy-2-methylbutanoyl-CoA. Optimal isomerase for 2,5 double bonds into 3,5 form isomerization in a range of enoyl-CoA species. Also able to isomerize both 3-cis and 3-trans double bonds into the 2-trans form in a range of enoyl-CoA species. Regulates the amount of medium-chain dicarboxylic fatty acids which are essential regulators of all fatty acid oxidation pathways. Also involved in the degradation of long-chain dicarboxylic acids through peroxisomal beta-oxidation. The polypeptide is Peroxisomal bifunctional enzyme (ehhadh) (Danio rerio (Zebrafish)).